A 215-amino-acid chain; its full sequence is Protein GrpE (215 aa).

Residues 1–28 (MKHTSDTPSNSDMPSDSQATQPNASATG) show a composition bias toward polar residues. The segment at 1–52 (MKHTSDTPSNSDMPSDSQATQPNASATGQAAHAYSSQAQRASADAQAVAGDE) is disordered. Residues 29–52 (QAAHAYSSQAQRASADAQAVAGDE) show a composition bias toward low complexity.

This sequence belongs to the GrpE family. In terms of assembly, homodimer.

It localises to the cytoplasm. Participates actively in the response to hyperosmotic and heat shock by preventing the aggregation of stress-denatured proteins, in association with DnaK and GrpE. It is the nucleotide exchange factor for DnaK and may function as a thermosensor. Unfolded proteins bind initially to DnaJ; upon interaction with the DnaJ-bound protein, DnaK hydrolyzes its bound ATP, resulting in the formation of a stable complex. GrpE releases ADP from DnaK; ATP binding to DnaK triggers the release of the substrate protein, thus completing the reaction cycle. Several rounds of ATP-dependent interactions between DnaJ, DnaK and GrpE are required for fully efficient folding. This chain is Protein GrpE, found in Ralstonia pickettii (strain 12J).